Consider the following 264-residue polypeptide: COP9 signalosome complex subunit 7b (264 aa).

At Ala-2 the chain carries N-acetylalanine. Residues 2–159 (AGEQKPSSNL…QLLEVDFCIG (158 aa)) enclose the PCI domain. The stretch at 194-237 (RANQYKENHHRTQQQVEAEVSNIKKTLKATASSSAQEMEQQLAE) forms a coiled coil. Polar residues predominate over residues 223 to 232 (TASSSAQEME). Residues 223-264 (TASSSAQEMEQQLAERECPPHTEQRQPTKKMSKVKGLVSSRH) form a disordered region. The segment covering 235–248 (LAERECPPHTEQRQ) has biased composition (basic and acidic residues).

It belongs to the CSN7/EIF3M family. CSN7 subfamily. As to quaternary structure, component of the CSN complex, composed of COPS1/GPS1, COPS2, COPS3, COPS4, COPS5, COPS6, COPS7 (COPS7A or COPS7B) and COPS8 and COPS9. In the complex, it probably interacts directly with COPS1, COPS2, COPS4, COPS5, COPS6 and COPS8. Interacts with EIF3S6.

It localises to the cytoplasm. The protein resides in the nucleus. Its function is as follows. Component of the COP9 signalosome complex (CSN), a complex involved in various cellular and developmental processes. The CSN complex is an essential regulator of the ubiquitin (Ubl) conjugation pathway by mediating the deneddylation of the cullin subunits of SCF-type E3 ligase complexes, leading to decrease the Ubl ligase activity of SCF-type complexes such as SCF, CSA or DDB2. The complex is also involved in phosphorylation of p53/TP53, JUN, I-kappa-B-alpha/NFKBIA, ITPK1 and IRF8/ICSBP, possibly via its association with CK2 and PKD kinases. CSN-dependent phosphorylation of TP53 and JUN promotes and protects degradation by the Ubl system, respectively. This Mus musculus (Mouse) protein is COP9 signalosome complex subunit 7b (Cops7b).